The following is a 185-amino-acid chain: Ribosome-recycling factor (185 aa).

The protein belongs to the RRF family.

It localises to the cytoplasm. In terms of biological role, responsible for the release of ribosomes from messenger RNA at the termination of protein biosynthesis. May increase the efficiency of translation by recycling ribosomes from one round of translation to another. The chain is Ribosome-recycling factor from Corynebacterium jeikeium (strain K411).